Here is a 179-residue protein sequence, read N- to C-terminus: NADH-quinone oxidoreductase subunit B (179 aa).

Residues Cys-52, Cys-53, Cys-117, and Cys-147 each contribute to the [4Fe-4S] cluster site.

The protein belongs to the complex I 20 kDa subunit family. As to quaternary structure, NDH-1 is composed of 14 different subunits. Subunits NuoB, C, D, E, F, and G constitute the peripheral sector of the complex. Requires [4Fe-4S] cluster as cofactor.

Its subcellular location is the cell inner membrane. The enzyme catalyses a quinone + NADH + 5 H(+)(in) = a quinol + NAD(+) + 4 H(+)(out). Functionally, NDH-1 shuttles electrons from NADH, via FMN and iron-sulfur (Fe-S) centers, to quinones in the respiratory chain. The immediate electron acceptor for the enzyme in this species is believed to be ubiquinone. Couples the redox reaction to proton translocation (for every two electrons transferred, four hydrogen ions are translocated across the cytoplasmic membrane), and thus conserves the redox energy in a proton gradient. In Ehrlichia chaffeensis (strain ATCC CRL-10679 / Arkansas), this protein is NADH-quinone oxidoreductase subunit B.